The sequence spans 304 residues: MKSNNLATEGINSLPLDHGENDAIRVSVLSEALPYIQKFAGRRIVIKYGGSAMSKESLKEAVFRDIALLSSVGAQPVIIHGGGPEINHWLTKLEIKSEFRDGLRITDSNTMDIVEMVLIGRVNKQIVNGINKVGASAVGLCGIDGKLIEARPWGDGSYGLVGEVARVNADVIEPLIANGYIPVISSVASSVEGINYNINADTVAGEIAAAIGAEKLILLTDTSGILKNKSDPLSLIQNIRLSDMRELIDKEVVNGGMTPKAECCIRALAQGVNAAHIIDGRIPHALLLEVFTDKGIGTMIVSRS.

Residues Gly82 to Gly83, Arg104, and Asn197 contribute to the substrate site.

The protein belongs to the acetylglutamate kinase family. ArgB subfamily.

It localises to the cytoplasm. The enzyme catalyses N-acetyl-L-glutamate + ATP = N-acetyl-L-glutamyl 5-phosphate + ADP. Its pathway is amino-acid biosynthesis; L-arginine biosynthesis; N(2)-acetyl-L-ornithine from L-glutamate: step 2/4. Catalyzes the ATP-dependent phosphorylation of N-acetyl-L-glutamate. The sequence is that of Acetylglutamate kinase from Prochlorococcus marinus (strain SARG / CCMP1375 / SS120).